Here is a 273-residue protein sequence, read N- to C-terminus: Petrobactin import ATP-binding protein FpuD (273 aa).

The 237-residue stretch at 5-241 (LETKRLTLSY…KLVRDVFRME (237 aa)) folds into the ABC transporter domain. 37-44 (GSNGCGKS) contacts ATP.

It belongs to the ABC transporter superfamily. The complex is composed of two ATP-binding proteins (FpuD), two transmembrane proteins (FpuB) and a solute-binding protein (FpuA).

The protein resides in the cell membrane. It catalyses the reaction a Fe(III)-siderophore(out) + ATP + H2O = a Fe(III)-siderophore(in) + ADP + phosphate + H(+). Part of an ABC transporter complex involved in ferric-petrobactin uptake. Probably responsible for energy coupling to the transport system. The chain is Petrobactin import ATP-binding protein FpuD from Bacillus anthracis.